The sequence spans 640 residues: Threonine--tRNA ligase (640 aa).

In terms of domain architecture, TGS spans 1–61 (MPAITLPDGS…EHDAYVEIVT (61 aa)). The interval 242-533 (DHRRLGRTQD…LIEHYGGALP (292 aa)) is catalytic. 3 residues coordinate Zn(2+): Cys-333, His-384, and His-510.

The protein belongs to the class-II aminoacyl-tRNA synthetase family. In terms of assembly, homodimer. Zn(2+) is required as a cofactor.

The protein localises to the cytoplasm. It catalyses the reaction tRNA(Thr) + L-threonine + ATP = L-threonyl-tRNA(Thr) + AMP + diphosphate + H(+). Catalyzes the attachment of threonine to tRNA(Thr) in a two-step reaction: L-threonine is first activated by ATP to form Thr-AMP and then transferred to the acceptor end of tRNA(Thr). Also edits incorrectly charged L-seryl-tRNA(Thr). In Halorhodospira halophila (strain DSM 244 / SL1) (Ectothiorhodospira halophila (strain DSM 244 / SL1)), this protein is Threonine--tRNA ligase.